Here is a 407-residue protein sequence, read N- to C-terminus: MKKIALIIGSMIAGGIISAAGFTWVAKAEPPAEKTSTAERKILFWYDPMYPNTRFDKPGKSPFMDMDLVPKYADEESSASGVRIDPTQTQNLGVKTATVTRGPLTFAQSFPANVSYNEYQYAIVQARAAGFIDKVYPLTVGDKVQKGTPLLDLTIPDWVEAQSEYLLLRETGGTATQTEGILERLRLAGMPEADIRRLIATQKIQTRFTLKAPIDGVITAFDLRAGMNIAKDNVVAKIQGMDPVWVTAAIPESIAWLVKDASQFTLTVPARPDKTLTIRKWTLLPGVDAATRTLQLRLEVDNADEALKPGMNAWLQLNTASEPMLLIPSQALIDTGSEQRVITVDADGRFVPKRVAVFQASQGVTALRSGLAEGEKVVSSGLFLIDSEANISGALERMRSESATHAH.

An N-terminal signal peptide occupies residues 1 to 28; it reads MKKIALIIGSMIAGGIISAAGFTWVAKA.

The protein belongs to the membrane fusion protein (MFP) (TC 8.A.1) family. In terms of assembly, the cus efflux system is composed of CusA, CusB, CusC and CusF.

Part of a cation efflux system that mediates resistance to copper and silver. This chain is Cation efflux system protein CusB (cusB), found in Escherichia coli (strain K12).